The chain runs to 396 residues: S-adenosylmethionine synthase (396 aa).

Position 16 (His-16) interacts with ATP. Residue Asp-18 coordinates Mg(2+). Residue Glu-44 participates in K(+) binding. L-methionine-binding residues include Glu-57 and Gln-100. Residues 100–110 (QSVDIAQGVDR) form a flexible loop region. Residues 165 to 167 (DAK), Asp-240, 246 to 247 (RK), Ala-263, and Lys-267 each bind ATP. Asp-240 serves as a coordination point for L-methionine. Lys-271 contributes to the L-methionine binding site.

Belongs to the AdoMet synthase family. In terms of assembly, homotetramer; dimer of dimers. Requires Mg(2+) as cofactor. It depends on K(+) as a cofactor.

The protein localises to the cytoplasm. It carries out the reaction L-methionine + ATP + H2O = S-adenosyl-L-methionine + phosphate + diphosphate. It functions in the pathway amino-acid biosynthesis; S-adenosyl-L-methionine biosynthesis; S-adenosyl-L-methionine from L-methionine: step 1/1. Its function is as follows. Catalyzes the formation of S-adenosylmethionine (AdoMet) from methionine and ATP. The overall synthetic reaction is composed of two sequential steps, AdoMet formation and the subsequent tripolyphosphate hydrolysis which occurs prior to release of AdoMet from the enzyme. This is S-adenosylmethionine synthase from Pseudomonas savastanoi pv. phaseolicola (strain 1448A / Race 6) (Pseudomonas syringae pv. phaseolicola (strain 1448A / Race 6)).